A 247-amino-acid chain; its full sequence is Probable transcriptional regulatory protein MS0710 (247 aa).

Belongs to the TACO1 family.

The protein resides in the cytoplasm. The protein is Probable transcriptional regulatory protein MS0710 of Mannheimia succiniciproducens (strain KCTC 0769BP / MBEL55E).